The chain runs to 67 residues: Large ribosomal subunit protein uL29 (67 aa).

Belongs to the universal ribosomal protein uL29 family. Part of the 50S ribosomal subunit. Contacts protein L23 and trigger factor when it is complexed with the ribosome.

Functionally, binds the 23S rRNA. One of the proteins that surrounds the polypeptide exit tunnel on the outside of the subunit. This Deinococcus radiodurans (strain ATCC 13939 / DSM 20539 / JCM 16871 / CCUG 27074 / LMG 4051 / NBRC 15346 / NCIMB 9279 / VKM B-1422 / R1) protein is Large ribosomal subunit protein uL29 (rpmC).